The chain runs to 557 residues: MNNPRHNIREVRSPRGTEISAKSWLTEAPLRMLMNNLDPDVAENPHELVVYGGIGRAARTWADFDRIVASLKDLNEDETLLVQSGKPVGVFRTHKDAPRVLIANSNLVPHWATWDHFNELDKKGLAMYGQMTAGSWIYIGTQGIVQGTYETFVEAGRQHYGGSLKGKWILTGGLGGMGGAQPLAAVMAGACCLAVECNPDSIDFRLRTRYLDEKAETLEEAMEMIERWTKAGEPKSVGLLGNAAEILPEMVRRGIRPDMVTDQTSAHDPINGYLPKGWTMAEWKAKRESDPKAVEKAARASMRDHVEAMLAFWDSGVPTLDYGNNIRQVAKDEGLERAFDFPGFVPAYIRPLFCRGIGPFRWAALSGDPEDIYRTDRKVKELLPDNKHLHNWLDMARERIAFQGLPARICWVGLGDRHRLGLAFNEMVRSGELKAPIVIGRDHLDSGSVASPNRETEAMKDGSDAVSDWPLLNALLNTASGATWVSLHHGGGVGMGFSQHSGMVICCDGTDDAARRIERVLWNDPATGVMRHADAGYDIAVDCAREKGLRLPGILGE.

NAD(+) is bound by residues 52-53 (GG), Gln130, 176-178 (GMG), Glu196, 242-243 (NA), 263-267 (QTSAH), 273-274 (YL), and Tyr322. Cys410 is a catalytic residue. Gly492 is an NAD(+) binding site.

It belongs to the urocanase family. NAD(+) is required as a cofactor.

The protein resides in the cytoplasm. The enzyme catalyses 4-imidazolone-5-propanoate = trans-urocanate + H2O. It functions in the pathway amino-acid degradation; L-histidine degradation into L-glutamate; N-formimidoyl-L-glutamate from L-histidine: step 2/3. In terms of biological role, catalyzes the conversion of urocanate to 4-imidazolone-5-propionate. In Rhizobium meliloti (strain 1021) (Ensifer meliloti), this protein is Urocanate hydratase.